The following is a 264-amino-acid chain: S-adenosylmethionine decarboxylase proenzyme (264 aa).

Catalysis depends on Ser-112, which acts as the Schiff-base intermediate with substrate; via pyruvic acid. A Pyruvic acid (Ser); by autocatalysis modification is found at Ser-112. The Proton acceptor; for processing activity role is filled by His-117. Residue Cys-140 is the Proton donor; for catalytic activity of the active site.

Belongs to the prokaryotic AdoMetDC family. Type 2 subfamily. Heterooctamer of four alpha and four beta chains arranged as a tetramer of alpha/beta heterodimers. Requires pyruvate as cofactor. In terms of processing, is synthesized initially as an inactive proenzyme. Formation of the active enzyme involves a self-maturation process in which the active site pyruvoyl group is generated from an internal serine residue via an autocatalytic post-translational modification. Two non-identical subunits are generated from the proenzyme in this reaction, and the pyruvate is formed at the N-terminus of the alpha chain, which is derived from the carboxyl end of the proenzyme. The post-translation cleavage follows an unusual pathway, termed non-hydrolytic serinolysis, in which the side chain hydroxyl group of the serine supplies its oxygen atom to form the C-terminus of the beta chain, while the remainder of the serine residue undergoes an oxidative deamination to produce ammonia and the pyruvoyl group blocking the N-terminus of the alpha chain.

It catalyses the reaction S-adenosyl-L-methionine + H(+) = S-adenosyl 3-(methylsulfanyl)propylamine + CO2. The protein operates within amine and polyamine biosynthesis; S-adenosylmethioninamine biosynthesis; S-adenosylmethioninamine from S-adenosyl-L-methionine: step 1/1. In terms of biological role, catalyzes the decarboxylation of S-adenosylmethionine to S-adenosylmethioninamine (dcAdoMet), the propylamine donor required for the synthesis of the polyamines spermine and spermidine from the diamine putrescine. The chain is S-adenosylmethionine decarboxylase proenzyme from Salmonella agona (strain SL483).